The following is a 416-amino-acid chain: Venom allergen 5 (416 aa).

Positions 1 to 24 (MKGILLLFLKLVVLFVYLCSSVLS) are cleaved as a signal peptide. Positions 57–217 (DDRNTIINLH…NYGPAGNLDD (161 aa)) constitute an SCP domain. Arginine 82 carries the post-translational modification Arginine amide; in Cryptide Pep-4.

It belongs to the CRISP family. Venom allergen 5-like subfamily. Contains 9 disulfide bonds. In terms of tissue distribution, expressed by the venom gland.

The protein localises to the secreted. Its function is as follows. Presents weak lactate dehydrogenase (LDH) release from mast cells. Does not induce hemolytic activity, mast cell degranulation, and antimicrobial effects. In vivo, injection into mice causes moderate edema formation, but induces very weak or no change in nociceptive sensibility. It also causes an alteration in rearing (standing on hind limbs), but does not impact locomotion. In Tityus serrulatus (Brazilian scorpion), this protein is Venom allergen 5.